The sequence spans 724 residues: Degenerin mec-10 (724 aa).

The Cytoplasmic portion of the chain corresponds to 1-125; sequence MNRGPPNPRM…GQAPNSLYRA (125 aa). A helical membrane pass occupies residues 126–146; it reads VWVFLLLICAIQFINQAVAVI. Over 147–684 the chain is Extracellular; it reads QKYQKMDKIT…FGGHLGLWSG (538 aa). Asn-294, Asn-370, Asn-463, Asn-605, and Asn-624 each carry an N-linked (GlcNAc...) asparagine glycan. The chain crosses the membrane as a helical span at residues 685–705; that stretch reads VSVMTCCEFVCLVLELLYMAV. Residues 706-724 lie on the Cytoplasmic side of the membrane; sequence THHITQERIRRRENAANEF.

This sequence belongs to the amiloride-sensitive sodium channel (TC 1.A.6) family. In terms of assembly, the channel is probably composed of at least the mec-2, mec-4, mec-6 and mec-10 subunits.

It is found in the cell membrane. Its function is as follows. Amiloride-sensitive sodium channel subunit required for mechanosensory transduction (touch sensitivity). Negatively regulates the turning step of male mating behavior. The polypeptide is Degenerin mec-10 (Caenorhabditis briggsae).